Here is a 489-residue protein sequence, read N- to C-terminus: Cytochrome P450 monooxygenase orf5 (489 aa).

Residues 13-35 form a helical membrane-spanning segment; the sequence is FVRLLAFHLIGLFVSITVYRLFF. Asn37, Asn118, Asn171, and Asn345 each carry an N-linked (GlcNAc...) asparagine glycan. Cys428 lines the heme pocket.

The protein belongs to the cytochrome P450 family. The cofactor is heme.

It localises to the membrane. The protein operates within mycotoxin biosynthesis. Its function is as follows. Cytochrome P450 monooxygenase; part of the gene cluster that mediates the biosynthesis of brefeldin A (BFA), a protein transport inhibitor that shows antiviral, antifungal, and antitumor properties. The proposed biosynthesis of BFA involves formation of an acyclic polyketide chain that is differentially tailored throughout the backbone. The highly reducing polyketide synthase Bref-PKS is proposed to synthesize the precisely reduced octaketide precursor, which could then be directly offloaded by the thiohydrolase enzyme Bref-TH followed by a cytochrome P450 monooxygenase-mediated formation of the cyclopentane ring and macrocyclization to afford 7-deoxy BFA. Alternatively, the first ring annulation can also occur on the ACP-tethered intermediate before the thiohydrolase release and lactonization. The C7-hydroxylation by another cytochrome P450 monooxygenase is believed to be the final step in the process to obtain the final structure of BFA. In addition to the HRPKS Bref-PKS and the thiohydrolase Bref-TH, the brefeldin A biosynthesis cluster contains 4 cytochrome p450 monooxygenases (called orf3 to orf6), as well a the probable cluster-specific transcription regulator orf8. The chain is Cytochrome P450 monooxygenase orf5 from Eupenicillium brefeldianum (Penicillium brefeldianum).